We begin with the raw amino-acid sequence, 510 residues long: GTPase Der (510 aa).

EngA-type G domains are found at residues 4–168 (PVVA…AEKM) and 222–395 (IKIA…ACAT). Residues 10 to 17 (GRPNVGKS), 57 to 61 (DTGGI), 120 to 123 (NKTD), 228 to 235 (GRPNVGKS), 275 to 279 (DTAGV), and 340 to 343 (NKWD) each bind GTP. A KH-like domain is found at 396–480 (QKMTTSMLTR…PIRLLFQEGN (85 aa)).

The protein belongs to the TRAFAC class TrmE-Era-EngA-EngB-Septin-like GTPase superfamily. EngA (Der) GTPase family. As to quaternary structure, associates with the 50S ribosomal subunit.

In terms of biological role, GTPase that plays an essential role in the late steps of ribosome biogenesis. The polypeptide is GTPase Der (Pasteurella multocida (strain Pm70)).